Consider the following 349-residue polypeptide: Draxin (349 aa).

The first 25 residues, 1-25 (MAGPAIHTAPMLFLVLLLPLELSLA), serve as a signal peptide directing secretion. Disordered stretches follow at residues 38 to 79 (PENH…QDGA), 118 to 145 (PYPE…RRDR), and 244 to 273 (DGWP…EGEP). The span at 120–131 (PEKENRPPGWER) shows a compositional bias: basic and acidic residues. 2 stretches are compositionally biased toward basic residues: residues 132–145 (TRKR…RRDR) and 249–258 (AKKKEKHRGK). Asn264 carries an N-linked (GlcNAc...) asparagine glycan.

This sequence belongs to the draxin family. Interacts with LRP6.

It localises to the secreted. Its function is as follows. Chemorepulsive axon guidance protein required for the development of spinal cord and forebrain commissures. Acts as a chemorepulsive guidance protein for commissural axons during development. Able to inhibit or repel neurite outgrowth from dorsal spinal cord. Inhibits the stabilization of cytosolic beta-catenin (CTNNB1) via its interaction with LRP6, thereby acting as an antagonist of Wnt signaling pathway. In Homo sapiens (Human), this protein is Draxin.